The chain runs to 203 residues: Small ribosomal subunit protein uS4c (203 aa).

The interval T17–D39 is disordered. An S4 RNA-binding domain is found at M92–P164.

It belongs to the universal ribosomal protein uS4 family. Part of the 30S ribosomal subunit. Contacts protein S5. The interaction surface between S4 and S5 is involved in control of translational fidelity.

The protein localises to the plastid. It localises to the chloroplast. In terms of biological role, one of the primary rRNA binding proteins, it binds directly to 16S rRNA where it nucleates assembly of the body of the 30S subunit. With S5 and S12 plays an important role in translational accuracy. In Phaeodactylum tricornutum (strain CCAP 1055/1), this protein is Small ribosomal subunit protein uS4c (rps4).